Consider the following 727-residue polypeptide: Putative E3 ubiquitin-protein ligase UNKL (727 aa).

The segment at 1 to 21 (MPSVSKAAAAALSGSPPQTEK) is disordered. 4 C3H1-type zinc fingers span residues 75–104 (YSPD…HRTT), 115–145 (YYKT…HGPL), 243–277 (QYRS…HSRT), and 285–313 (IYKS…HTEK). Residues 330–339 (STSAYSSQPG) show a composition bias toward polar residues. 3 disordered regions span residues 330 to 360 (STSA…DSKQ), 446 to 514 (LTGP…ATLG), and 543 to 562 (SPSP…SPNS). The span at 463–495 (SLPRSPSLHSSSSLSTSPLSSLSQSLSGPLVSS) shows a compositional bias: low complexity. The RING-type zinc-finger motif lies at 686 to 721 (CVACQERAHGTVLRPCQHRVLCEPCAASTPECPYCK).

It belongs to the unkempt family. As to quaternary structure, interacts with the GTP-bound form of Rac1. Interacts with Baf60b/Smarcd2. In terms of processing, ubiquitination is enhanced by activated Rac1. The presence of the RING finger domain is not essential for ubiquitination to occur. As to expression, ubiquitous.

Its subcellular location is the cytoplasm. It localises to the nucleus. The protein operates within protein modification; protein ubiquitination. Its function is as follows. May participate in a protein complex showing an E3 ligase activity regulated by Rac1. Ubiquitination is directed towards itself and possibly other substrates, such as Baf60b/Smarcd2. Intrinsic E3 ligase activity has not been proven. This chain is Putative E3 ubiquitin-protein ligase UNKL (Unkl), found in Mus musculus (Mouse).